The chain runs to 362 residues: MTRVLGIETSCDETAAAVVTRGADEAPAILSNVVLSQIEEHAAFGGVVPEIAARAHVEALDGVIEAALAEAALSLDEVDAIAATAGPGLIGGLIVGLTTAKAIAAALGKPLLPVNHLEGHALTARLTDRLEFPYLLLLVSGGHTQIVHVAGVGRYERWASTIDDALGEAFDKTAKLLGLPYPGGPNVEKAAAEGDPARFAFPTPLKGEARPDFSFSGLKTAVRRAAGELAPLSEQDVADLCASFQFAVTQTLADRVARSLERFGKEHPKLQQPALVVAGGVAANAAVRGTLEDLCRKKGFRLVAPPLNLCGDNAAMIAWAGLERLESGLKQEGALAFAPRPRWPLDESAAPLFGAGKRGAKA.

Residues histidine 116 and histidine 120 each contribute to the Fe cation site. Substrate contacts are provided by residues 138-142, aspartate 171, glycine 184, and asparagine 284; that span reads LVSGG. Residue aspartate 312 coordinates Fe cation.

This sequence belongs to the KAE1 / TsaD family. It depends on Fe(2+) as a cofactor.

The protein resides in the cytoplasm. The catalysed reaction is L-threonylcarbamoyladenylate + adenosine(37) in tRNA = N(6)-L-threonylcarbamoyladenosine(37) in tRNA + AMP + H(+). Its function is as follows. Required for the formation of a threonylcarbamoyl group on adenosine at position 37 (t(6)A37) in tRNAs that read codons beginning with adenine. Is involved in the transfer of the threonylcarbamoyl moiety of threonylcarbamoyl-AMP (TC-AMP) to the N6 group of A37, together with TsaE and TsaB. TsaD likely plays a direct catalytic role in this reaction. This is tRNA N6-adenosine threonylcarbamoyltransferase from Chelativorans sp. (strain BNC1).